The chain runs to 494 residues: Splicing regulatory glutamine/lysine-rich protein 1 (494 aa).

The region spanning 69-145 (RTVYVGNLNS…RPLKINHSNN (77 aa)) is the RRM domain. 2 positions are modified to phosphoserine: Ser174 and Ser187. The interval 176-494 (ISAAIEPESG…ESPCSKADAV (319 aa)) is disordered. A compositionally biased stretch (basic and acidic residues) spans 183–192 (ESGKSNERKG). Positions 193 to 262 (GRSRSHTRSK…KSRSRSRSRD (70 aa)) are enriched in basic residues. Residues 263 to 340 (KRKDTREKVK…DRSKETDEKR (78 aa)) show a composition bias toward basic and acidic residues. Thr348 bears the Phosphothreonine mark. The span at 357–373 (RRSRSTSRERRRRRSRS) shows a compositional bias: basic residues. Positions 404-474 (REKERDHISD…SPRTEDEGKV (71 aa)) are enriched in basic and acidic residues. Residues 476–486 (HNGNCQPNEES) are compositionally biased toward polar residues. A Glycyl lysine isopeptide (Lys-Gly) (interchain with G-Cter in SUMO2) cross-link involves residue Lys490.

The protein belongs to the splicing factor SR family. In terms of assembly, homodimer. Binds SFRS1, SFRS2, SFRS3 and SFRS6. Interacts with the spliceosome. Interacts with SREK1IP1.

Its subcellular location is the nucleus. Its function is as follows. Participates in the regulation of alternative splicing by modulating the activity of other splice facors. Inhibits the splicing activity of SFRS1, SFRS2 and SFRS6. Augments the splicing activity of SFRS3. This Mus musculus (Mouse) protein is Splicing regulatory glutamine/lysine-rich protein 1 (Srek1).